The chain runs to 264 residues: Homeobox protein vent1 (264 aa).

Basic and acidic residues-rich tracts occupy residues lysine 16–methionine 26 and tyrosine 44–glutamate 59. The disordered stretch occupies residues lysine 16 to glutamine 140. Polar residues predominate over residues histidine 60–proline 80. The segment covering threonine 117 to arginine 130 has biased composition (basic and acidic residues). Residues glutamine 129–isoleucine 188 constitute a DNA-binding region (homeobox).

Expressed in the ventral marginal zone of gastrulae. At stage 11.5, also expressed in the ventral region of the animal cap (ectoderm). At the end of gastrulation, predominantly localized to the ventral and lateral regions of the closing slit blastopore. At early tail bud stage, expression is maintained only in the forming proctodeum.

Its subcellular location is the nucleus. Transcriptional repressor. Cooperates with vent2 in a ventral signaling pathway downstream of bmp4, which antagonizes the Spemann organizer and dorsal mesoderm formation, and leads to ventral mesoderm formation. Acts downstream of bmp4 to repress transcription of foxa4-B/XFD-1'. Binds to DNA with preference for the target sequence 5'-CTATT[T/C]G-3'. Also binds 5'-TGCATTTTG-3' at a lower frequency, and occasionally 5'-TTGATC-3'. Binds to the homeobox 2 (HBX2) repressor element in the promoter of the myf5 gene and represses myf5 transcription in the ventral domain. This is Homeobox protein vent1 (vent1) from Xenopus laevis (African clawed frog).